A 285-amino-acid chain; its full sequence is Protease HtpX homolog (285 aa).

The next 2 membrane-spanning stretches (helical) occupy residues 7 to 27 and 30 to 50; these read TAMLMAAITALFIVIGGMIGG and GMTIALVIALGMNFFSYWFSD. Zn(2+) is bound at residue H131. Residue E132 is part of the active site. Zn(2+) is bound at residue H135. The next 2 helical transmembrane spans lie at 141 to 161 and 177 to 197; these read ILISTISATMAGAISALANFA and IAGIAVALLAPIAGALIQMAI. E202 lines the Zn(2+) pocket.

The protein belongs to the peptidase M48B family. Requires Zn(2+) as cofactor.

The protein resides in the cell inner membrane. This chain is Protease HtpX homolog, found in Paraburkholderia phytofirmans (strain DSM 17436 / LMG 22146 / PsJN) (Burkholderia phytofirmans).